The primary structure comprises 2193 residues: Genome polyprotein (2193 aa).

Residues 1-22 are disordered; sequence MGSQVSTQRSGSHENSNSASEG. Gly-2 carries the N-myristoyl glycine; by host lipid modification. Residues 2–1503 lie on the Cytoplasmic side of the membrane; it reads GSQVSTQRSG…HLNRAVLIMQ (1502 aa). 2 amphipathic alpha-helix regions span residues 566-588 and 568-588; these read GDGIADMIDQAVTSRVGRALTSL and GIADMIDQAVTSRVGRALTSL. Active-site for protease 2A activity residues include His-883 and Asp-901. Cys-918 and Cys-920 together coordinate Zn(2+). The For protease 2A activity role is filled by Cys-972. Zn(2+) is bound by residues Cys-978 and His-980. Positions 1112-1184 are membrane-binding; it reads SASWLKKFND…EQSAASQEDL (73 aa). An oligomerization region spans residues 1112–1250; the sequence is SASWLKKFND…SPGTGKSLAT (139 aa). Residues 1133-1137 form an RNA-binding region; that stretch reads SNKIS. An SF3 helicase domain is found at 1216-1374; that stretch reads EKRMNNYMQF…YKTDLGRLDA (159 aa). 1240–1247 contributes to the ATP binding site; that stretch reads GSPGTGKS. Zn(2+) is bound by residues Cys-1381, Cys-1392, and Cys-1397. A C4-type; degenerate zinc finger spans residues 1381–1397; the sequence is CSENNTANFKRCSPLVC. Residues 1424-1431 form an RNA-binding region; the sequence is EYNNRYAI. Residues 1435 to 1440 are oligomerization; sequence IEALFQ. The stretch at 1504 to 1519 is an intramembrane region; sequence SIATVVAVVSLVYVIY. Topologically, residues 1520–2193 are cytoplasmic; it reads KLFAGFQGAY…NLRRNWLELF (674 aa). Tyr-1529 carries the post-translational modification O-(5'-phospho-RNA)-tyrosine. In terms of domain architecture, Peptidase C3 spans 1549–1727; the sequence is GPSLDFALSL…FCAGLKRSYF (179 aa). Active-site for protease 3C activity residues include His-1588, Glu-1619, and Cys-1695. The region spanning 1958-2073 is the RdRp catalytic domain; the sequence is GSLFAFDYSG…ASYPFPIDCL (116 aa). Residues Asp-1964 and Asp-2060 each coordinate Mg(2+).

The protein belongs to the picornaviruses polyprotein family. As to quaternary structure, interacts with capsid protein VP1 and capsid protein VP3 to form heterotrimeric protomers. In terms of assembly, interacts with capsid protein VP0, and capsid protein VP3 to form heterotrimeric protomers. Five protomers subsequently associate to form pentamers which serve as building blocks for the capsid. Interacts with capsid protein VP2, capsid protein VP3 and capsid protein VP4 following cleavage of capsid protein VP0. Interacts with capsid protein VP1 and capsid protein VP3 in the mature capsid. As to quaternary structure, interacts with capsid protein VP0 and capsid protein VP1 to form heterotrimeric protomers. Five protomers subsequently associate to form pentamers which serve as building blocks for the capsid. Interacts with capsid protein VP4 in the mature capsid. Interacts with protein 2C; this interaction may be important for virion morphogenesis. In terms of assembly, interacts with capsid protein VP1 and capsid protein VP3. Homodimer. As to quaternary structure, homohexamer; forms a hexameric ring structure with 6-fold symmetry characteristic of AAA+ ATPases. Interacts (via N-terminus) with host RTN3 (via reticulon domain); this interaction is important for viral replication. Interacts with capsid protein VP3; this interaction may be important for virion morphogenesis. In terms of assembly, interacts with protein 3CD. Homodimer. Interacts with host GBF1. Interacts (via GOLD domain) with host ACBD3 (via GOLD domain); this interaction allows the formation of a viral protein 3A/ACBD3 heterotetramer with a 2:2 stoichiometry, which will stimulate the recruitment of host PI4KB in order to synthesize PI4P at the viral RNA replication sites. As to quaternary structure, interacts with RNA-directed RNA polymerase. In terms of assembly, interacts with host IFIH1/MDA5; this interaction inhibits host IFIH1. Interacts with protein 3AB and with RNA-directed RNA polymerase. As to quaternary structure, interacts with Viral protein genome-linked and with protein 3CD. Mg(2+) is required as a cofactor. Post-translationally, specific enzymatic cleavages in vivo by the viral proteases yield processing intermediates and the mature proteins. Myristoylation is required for the formation of pentamers during virus assembly. Further assembly of 12 pentamers and a molecule of genomic RNA generates the provirion. In terms of processing, during virion maturation, immature virions are rendered infectious following cleavage of VP0 into VP4 and VP2. This maturation seems to be an autocatalytic event triggered by the presence of RNA in the capsid and it is followed by a conformational change infectious virion. Post-translationally, myristoylation is required during RNA encapsidation and formation of the mature virus particle. VPg is uridylylated by the polymerase into VPg-pUpU. This acts as a nucleotide-peptide primer for the genomic RNA replication.

The protein localises to the virion. Its subcellular location is the host cytoplasm. The protein resides in the host cytoplasmic vesicle membrane. It localises to the host nucleus. The enzyme catalyses a ribonucleoside 5'-triphosphate + H2O = a ribonucleoside 5'-diphosphate + phosphate + H(+). The catalysed reaction is Selective cleavage of Tyr-|-Gly bond in the picornavirus polyprotein.. It catalyses the reaction RNA(n) + a ribonucleoside 5'-triphosphate = RNA(n+1) + diphosphate. It carries out the reaction Selective cleavage of Gln-|-Gly bond in the poliovirus polyprotein. In other picornavirus reactions Glu may be substituted for Gln, and Ser or Thr for Gly.. With respect to regulation, replication or transcription is subject to high level of random mutations by the nucleotide analog ribavirin. Forms an icosahedral capsid of pseudo T=3 symmetry with capsid proteins VP2 and VP3. The capsid is 300 Angstroms in diameter, composed of 60 copies of each capsid protein and enclosing the viral positive strand RNA genome. Capsid protein VP1 mainly forms the vertices of the capsid. Capsid protein VP1 interacts with host cell receptor to provide virion attachment to target host cells. This attachment induces virion internalization. After binding to its receptor, the capsid undergoes conformational changes. Capsid protein VP1 N-terminus (that contains an amphipathic alpha-helix) and capsid protein VP4 are externalized. Together, they shape a pore in the host membrane through which viral genome is translocated to host cell cytoplasm. In terms of biological role, forms an icosahedral capsid of pseudo T=3 symmetry with capsid proteins VP2 and VP3. The capsid is 300 Angstroms in diameter, composed of 60 copies of each capsid protein and enclosing the viral positive strand RNA genome. Its function is as follows. Lies on the inner surface of the capsid shell. After binding to the host receptor, the capsid undergoes conformational changes. Capsid protein VP4 is released, Capsid protein VP1 N-terminus is externalized, and together, they shape a pore in the host membrane through which the viral genome is translocated into the host cell cytoplasm. Functionally, component of immature procapsids, which is cleaved into capsid proteins VP4 and VP2 after maturation. Allows the capsid to remain inactive before the maturation step. Cysteine protease that cleaves viral polyprotein and specific host proteins. It is responsible for the autocatalytic cleavage between the P1 and P2 regions, which is the first cleavage occurring in the polyprotein. Also cleaves the host translation initiation factor EIF4G1, in order to shut down the capped cellular mRNA translation. Inhibits the host nucleus-cytoplasm protein and RNA trafficking by cleaving host members of the nuclear pores. Counteracts stress granule formation probably by antagonizing its assembly or promoting its dissassembly. Cleaves and inhibits host IFIH1/MDA5, thereby inhibiting the type-I IFN production and the establishment of the antiviral state. Cleaves and inhibits host MAVS, thereby inhibiting the type-I IFN production and the establishment of the antiviral state. In terms of biological role, plays an essential role in the virus replication cycle by acting as a viroporin. Creates a pore in the host endoplasmic reticulum and as a consequence releases Ca2+ in the cytoplasm of infected cell. In turn, high levels of cytoplasmic calcium may trigger membrane trafficking and transport of viral ER-associated proteins to viroplasms, sites of viral genome replication. Its function is as follows. Induces and associates with structural rearrangements of intracellular membranes. Displays RNA-binding, nucleotide binding and NTPase activities. May play a role in virion morphogenesis and viral RNA encapsidation by interacting with the capsid protein VP3. Functionally, localizes the viral replication complex to the surface of membranous vesicles. Together with protein 3CD binds the Cis-Active RNA Element (CRE) which is involved in RNA synthesis initiation. Acts as a cofactor to stimulate the activity of 3D polymerase, maybe through a nucleid acid chaperone activity. Localizes the viral replication complex to the surface of membranous vesicles. It inhibits host cell endoplasmic reticulum-to-Golgi apparatus transport and causes the disassembly of the Golgi complex, possibly through GBF1 interaction. This would result in depletion of MHC, trail receptors and IFN receptors at the host cell surface. Plays an essential role in viral RNA replication by recruiting ACBD3 and PI4KB at the viral replication sites, thereby allowing the formation of the rearranged membranous structures where viral replication takes place. In terms of biological role, acts as a primer for viral RNA replication and remains covalently bound to viral genomic RNA. VPg is uridylylated prior to priming replication into VPg-pUpU. The oriI viral genomic sequence may act as a template for this. The VPg-pUpU is then used as primer on the genomic RNA poly(A) by the RNA-dependent RNA polymerase to replicate the viral genome. During genome replication, the VPg-RNA linkage is removed by the host TDP2, thereby accelerating replication. During the late stage of the replication cycle, host TDP2 is excluded from sites of viral RNA synthesis and encapsidation, allowing for the generation of progeny virions. Its function is as follows. Involved in the viral replication complex and viral polypeptide maturation. It exhibits protease activity with a specificity and catalytic efficiency that is different from protease 3C. Protein 3CD lacks polymerase activity. Protein 3CD binds to the 5'UTR of the viral genome. Functionally, major viral protease that mediates proteolytic processing of the polyprotein. Cleaves host EIF5B, contributing to host translation shutoff. Also cleaves host PABPC1, contributing to host translation shutoff. Binds and inhibits host IFIH1/MDA5, thereby inhibiting the type-I IFN production and the establishment of the antiviral state. Cleaves host MAP3K7/TAK1, resulting in inhibition of TRAF6-triggered NF-kappa-B induction. Cleaves host NLRP1, triggers host N-glycine-mediated degradation of the autoinhibitory NLRP1 N-terminal fragment. Replicates the viral genomic RNA on the surface of intracellular membranes. May form linear arrays of subunits that propagate along a strong head-to-tail interaction called interface-I. Covalently attaches UMP to a tyrosine of VPg, which is used to prime RNA synthesis. The positive stranded RNA genome is first replicated at virus induced membranous vesicles, creating a dsRNA genomic replication form. This dsRNA is then used as template to synthesize positive stranded RNA genomes. ss(+)RNA genomes are either translated, replicated or encapsidated. This is Genome polyprotein from Homo sapiens (Human).